The sequence spans 224 residues: Urease accessory protein UreF (224 aa).

It belongs to the UreF family. In terms of assembly, ureD, UreF and UreG form a complex that acts as a GTP-hydrolysis-dependent molecular chaperone, activating the urease apoprotein by helping to assemble the nickel containing metallocenter of UreC. The UreE protein probably delivers the nickel.

It localises to the cytoplasm. Functionally, required for maturation of urease via the functional incorporation of the urease nickel metallocenter. This is Urease accessory protein UreF from Klebsiella pneumoniae subsp. pneumoniae (strain ATCC 700721 / MGH 78578).